A 138-amino-acid chain; its full sequence is D-ribose pyranase (138 aa).

Catalysis depends on His20, which acts as the Proton donor. Substrate-binding positions include Asp28, His105, and 127–129 (YAN).

Belongs to the RbsD / FucU family. RbsD subfamily. As to quaternary structure, homodecamer.

The protein resides in the cytoplasm. The enzyme catalyses beta-D-ribopyranose = beta-D-ribofuranose. The protein operates within carbohydrate metabolism; D-ribose degradation; D-ribose 5-phosphate from beta-D-ribopyranose: step 1/2. Catalyzes the interconversion of beta-pyran and beta-furan forms of D-ribose. The polypeptide is D-ribose pyranase (Psychromonas ingrahamii (strain DSM 17664 / CCUG 51855 / 37)).